The primary structure comprises 300 residues: uncharacterized protein (300 aa).

Positions 1–20 (MRLLISCILILSILVNFISG) are cleaved as a signal peptide. The Extracellular portion of the chain corresponds to 21–279 (HAVLVAPTPF…PCSIYGDGNG (259 aa)). 3 N-linked (GlcNAc...) asparagine glycosylation sites follow: Asn-56, Asn-217, and Asn-278. The helical transmembrane segment at 280–300 (SNLIIIPTLLIISILSLILMF) threads the bilayer.

The protein resides in the membrane. This is an uncharacterized protein from Dictyostelium discoideum (Social amoeba).